The chain runs to 439 residues: MLDIKYLRNNRDEANQRLIDRNVEDGVLDKLLADDEKRRSLIRKAEQLKAKRNQVSDQIGAAKRAKDNSAAQKAISDMQTVAGQIKDLDKQLSAIEESVHTQAAHLPNLADPRVPVGPDDSYNVEQRKWQPTDLQGRPAAFSKTPTWLKAHFEIGEDLGILDFQRGVKVSGARFLYYVGAGARLERAVYNFMLDEHRREGYTELLTPYMVTNESMYATGQFPKFVDDAYEVGKNQSMTMIPTAEVALVNWRRDEVLDESELPLYITALSPAFRQEAGAAGKDTRGLIRLHQFNKVEMVKFTKPEDSYNELEKMTVDAENILQKLELPYHVIRLSTGDMGFGSAMTYDLEVWFPTQDKYREISSVSNDEDFQARRGHIQYRDSKTGKLRFVHTLNGSGLAVGRTVAAILENYQNEDGTITIPEVLRPYFGEDKISKENAR.

242–244 (TAE) provides a ligand contact to L-serine. Position 273 to 275 (273 to 275 (RQE)) interacts with ATP. Glu-296 lines the L-serine pocket. 360–363 (EISS) lines the ATP pocket. Ser-396 serves as a coordination point for L-serine.

Belongs to the class-II aminoacyl-tRNA synthetase family. Type-1 seryl-tRNA synthetase subfamily. In terms of assembly, homodimer. The tRNA molecule binds across the dimer.

It is found in the cytoplasm. It carries out the reaction tRNA(Ser) + L-serine + ATP = L-seryl-tRNA(Ser) + AMP + diphosphate + H(+). It catalyses the reaction tRNA(Sec) + L-serine + ATP = L-seryl-tRNA(Sec) + AMP + diphosphate + H(+). It functions in the pathway aminoacyl-tRNA biosynthesis; selenocysteinyl-tRNA(Sec) biosynthesis; L-seryl-tRNA(Sec) from L-serine and tRNA(Sec): step 1/1. In terms of biological role, catalyzes the attachment of serine to tRNA(Ser). Is also able to aminoacylate tRNA(Sec) with serine, to form the misacylated tRNA L-seryl-tRNA(Sec), which will be further converted into selenocysteinyl-tRNA(Sec). The chain is Serine--tRNA ligase from Oenococcus oeni (strain ATCC BAA-331 / PSU-1).